Consider the following 173-residue polypeptide: Alpha-crystallin A chain (173 aa).

Position 1 is an N-acetylmethionine (Met1). The 111-residue stretch at 52–162 folds into the sHSP domain; sequence LFRGFMDSGI…SHSERPIPVS (111 aa). Residues His100, Glu102, His107, and His154 each coordinate Zn(2+). Positions 146 to 173 are disordered; that stretch reads MMSGLDSSHSERPIPVSREEKPTSAPSS. Residues 153-167 are compositionally biased toward basic and acidic residues; sequence SHSERPIPVSREEKP.

It belongs to the small heat shock protein (HSP20) family. As to quaternary structure, heteropolymer composed of three CRYAA and one CRYAB subunits. Inter-subunit bridging via zinc ions enhances stability, which is crucial as there is no protein turn over in the lens. Can also form homodimers and homotetramers (dimers of dimers) which serve as the building blocks of homooligomers. Within homooligomers, the zinc-binding motif is created from residues of 3 different molecules. His-100 and Glu-102 from one molecule are ligands of the zinc ion, and His-107 and His-154 residues from additional molecules complete the site with tetrahedral coordination geometry.

The protein resides in the cytoplasm. Its subcellular location is the nucleus. Functionally, contributes to the transparency and refractive index of the lens. May act as a chaperone, preventing aggregation of various proteins under a wide range of stress conditions. The sequence is that of Alpha-crystallin A chain (CRYAA) from Aquarana catesbeiana (American bullfrog).